Consider the following 1893-residue polypeptide: Protein TIC 214 (1893 aa).

Helical transmembrane passes span 18-38 (IINS…FSIG), 63-83 (AITG…YAPL), 87-107 (LGRP…HFFW), 127-147 (LSIQ…HFIL), 175-195 (VGWL…LVWI), and 224-244 (IFSI…PSPI). 2 stretches are compositionally biased toward basic and acidic residues: residues 249–258 (MKETSETEER) and 268–287 (EIER…RSTE). The tract at residues 249 to 317 (MKETSETEER…TEEIRVNGKE (69 aa)) is disordered. The segment covering 298 to 309 (EKEDPDKIDETE) has biased composition (acidic residues). The helical transmembrane segment at 1126 to 1146 (LHYFIKFFIERIYIDILLCLI) threads the bilayer.

It belongs to the TIC214 family. Part of the Tic complex.

It localises to the plastid. Its subcellular location is the chloroplast inner membrane. In terms of biological role, involved in protein precursor import into chloroplasts. May be part of an intermediate translocation complex acting as a protein-conducting channel at the inner envelope. The polypeptide is Protein TIC 214 (Vitis vinifera (Grape)).